A 325-amino-acid chain; its full sequence is Centromere protein O (325 aa).

Positions 1-35 (MEEERNSDEKENALCGRSLTAASRDGGGRMPAAPL) are disordered. A coiled-coil region spans residues 55–112 (LEMLEAQAHELGLKQEEKEQQEKKLDRLKARVQELRARRDELRAKVELQEKRLLDKEG).

This sequence belongs to the CENP-O/MCM21 family. Component of the CENPA-HI complex, at least composed of CENPH, CENPI, CENPK, CENPL, CENPM, CENPO and CENPP. Component of a discrete complex composed of at least CENPO, CENPP, CENPQ, CENPR and CENPU.

The protein localises to the nucleus. Its subcellular location is the chromosome. The protein resides in the centromere. Functionally, component of the CENPA-HI complex, a centromeric complex involved in assembly of kinetochore proteins, mitotic progression and chromosome segregation. Involved in kinetochore assembly and required for recovery from spindle damage. The protein is Centromere protein O (CENPO) of Gallus gallus (Chicken).